The following is a 562-amino-acid chain: MISQVERDLSIQNRLPGSDHTTPSPPTSPHLCRSRSKSSSVSGQQQSRNVAHRLSWIILSVLLRRQGILLFAPIIYISCMLFHLHAASFDASPIIHRRPAPGSVYRSPQVYARLRGEIEADNTTADAISTIWKRSYKGVEWKPCVNMSTGVLPVSNGFIFIEANGGLNQQRTSICNAVAVAGYLNATLVIPNFHYHSIWKDPSKFGDIYDEEYFIDTLANDVRVVDTVPEYLMERFDYNLTNVYNFRVKAWAPTSYYRDSVLPKLLEEKVIRISPFANRLSFDAPRAVQRFRCLANNVALRFSKPILTQGETLVNKMKGLSANNAGKYVSVHLRFEEDMVAFSCCVFDGGDQEKQDMIAARERGWKGKFTKPGRVIRPGANRLNGKCPLTPLEVGLMLRGMGFNKSTYIFLAAGPIYSANRTMAPLLEMFPNLQTKEMLASEEDLAPFKNFSSRMAAIDYTVCLHSEVFVTTQGGNFPHFLMGHRRYLFGGHSKTIQPDKRKLAVLFDNPKLGWKSFKRQMLSMRSHSDSKGFELKRSSDSIYIFPCPDCMCRKNKTTASAT.

The disordered stretch occupies residues 10 to 46 (SIQNRLPGSDHTTPSPPTSPHLCRSRSKSSSVSGQQQ). Residues 37 to 46 (KSSSVSGQQQ) show a composition bias toward low complexity. Residues 67–87 (GILLFAPIIYISCMLFHLHAA) traverse the membrane as a helical; Signal-anchor for type II membrane protein segment. N-linked (GlcNAc...) asparagine glycosylation is found at Asn-122, Asn-146, Asn-185, and Asn-239. Residue 332–334 (HLR) participates in substrate binding. N-linked (GlcNAc...) asparagine glycans are attached at residues Asn-404, Asn-420, Asn-450, and Asn-555.

This sequence belongs to the glycosyltransferase GT106 family.

The protein resides in the membrane. The protein operates within glycan metabolism. The chain is O-fucosyltransferase 4 from Arabidopsis thaliana (Mouse-ear cress).